A 287-amino-acid polypeptide reads, in one-letter code: Ribonuclease Z (287 aa).

7 residues coordinate Zn(2+): histidine 64, histidine 66, aspartate 68, histidine 69, histidine 124, aspartate 191, and histidine 250. Aspartate 68 (proton acceptor) is an active-site residue.

This sequence belongs to the RNase Z family. As to quaternary structure, homodimer. Zn(2+) is required as a cofactor.

The catalysed reaction is Endonucleolytic cleavage of RNA, removing extra 3' nucleotides from tRNA precursor, generating 3' termini of tRNAs. A 3'-hydroxy group is left at the tRNA terminus and a 5'-phosphoryl group is left at the trailer molecule.. Functionally, zinc phosphodiesterase, which displays some tRNA 3'-processing endonuclease activity. Probably involved in tRNA maturation, by removing a 3'-trailer from precursor tRNA. In Pyrobaculum aerophilum (strain ATCC 51768 / DSM 7523 / JCM 9630 / CIP 104966 / NBRC 100827 / IM2), this protein is Ribonuclease Z.